The following is a 151-amino-acid chain: 3-hydroxyacyl-[acyl-carrier-protein] dehydratase FabZ (151 aa).

The active site involves H56.

This sequence belongs to the thioester dehydratase family. FabZ subfamily.

Its subcellular location is the cytoplasm. It catalyses the reaction a (3R)-hydroxyacyl-[ACP] = a (2E)-enoyl-[ACP] + H2O. In terms of biological role, involved in unsaturated fatty acids biosynthesis. Catalyzes the dehydration of short chain beta-hydroxyacyl-ACPs and long chain saturated and unsaturated beta-hydroxyacyl-ACPs. This chain is 3-hydroxyacyl-[acyl-carrier-protein] dehydratase FabZ, found in Nitrobacter hamburgensis (strain DSM 10229 / NCIMB 13809 / X14).